A 432-amino-acid chain; its full sequence is MANVVVVGSQWGDEGKGKIVDWLSERADVVVRYQGGHNAGHTLVIDGVSYKLSLLPSGVVRSGKLSLIGNGVVFDPHAFVAEIERLKGQGISVTPESLKVAENTALILSLHRELDAFREDAASNSGTKIGTTRRGIGPAYEDKVGRRAIRVMDLADPETLSLKVDRLLTHHNALRRGLGHAEVSHEAIMQELTSVADKILPFVDRVWKILEDARRAGSRILFEGAQGTMLDIDHGTYPFVTSSNTVAGQAATGSGLGPGAVGYVLGITKAYTTRVGEGPFPTEQDNEIGEFLGNRGHEFGTVTGRKRRCGWFDAVQVRQSVVTNGMSGIALTKLDVLDGMEEIKVCTGYRLDGQVIDYLPASQGAQARLDPIYETLEGWKETTRGARKWNDLPAQAVKYVRHIEELIGAPVAILSTSPEREDAILVKDPFQD.

Residues 12 to 18 (GDEGKGK) and 40 to 42 (GHT) each bind GTP. Catalysis depends on Asp13, which acts as the Proton acceptor. Mg(2+)-binding residues include Asp13 and Gly40. IMP-binding positions include 13–16 (DEGK), 38–41 (NAGH), Thr132, Arg146, Gln226, Thr241, and Arg305. The active-site Proton donor is the His41. 301–307 (TVTGRKR) is a substrate binding site. GTP contacts are provided by residues Arg307, 333-335 (KLD), and 415-417 (STS).

It belongs to the adenylosuccinate synthetase family. As to quaternary structure, homodimer. Requires Mg(2+) as cofactor.

It is found in the cytoplasm. It carries out the reaction IMP + L-aspartate + GTP = N(6)-(1,2-dicarboxyethyl)-AMP + GDP + phosphate + 2 H(+). It functions in the pathway purine metabolism; AMP biosynthesis via de novo pathway; AMP from IMP: step 1/2. In terms of biological role, plays an important role in the de novo pathway of purine nucleotide biosynthesis. Catalyzes the first committed step in the biosynthesis of AMP from IMP. In Chelativorans sp. (strain BNC1), this protein is Adenylosuccinate synthetase.